We begin with the raw amino-acid sequence, 219 residues long: Protein OPG170 (219 aa).

The signal sequence occupies residues 1-16 (MYSLLFIILMCIPFSF). A glycan (N-linked (GlcNAc...) asparagine; by host) is linked at N70.

Belongs to the orthopoxvirus OPG170 family.

Its subcellular location is the secreted. May interact with several cellular chemokines to interfere with chemokine-glycosaminoglycan (GAG) interactions at the cell surface to alter chemotaxis of nearby responsive cells. The protein is Protein OPG170 (OPG170) of Vaccinia virus (strain Copenhagen) (VACV).